The chain runs to 1111 residues: uncharacterized protein (1111 aa).

Positions 1–31 are cleaved as a signal peptide; sequence MIRKLMKIPPFFTALFASAMFTLSVSQGVLA. 11 consecutive transmembrane segments (helical) span residues 490 to 510, 538 to 558, 572 to 592, 620 to 640, 644 to 664, 694 to 714, 797 to 817, 840 to 860, 885 to 905, 922 to 942, and 1003 to 1023; these read LPYLLMYFLGLFIVGGAIFKF, LALLLTAFLTLSSTLWFLAVC, FWHWSFSMAGYWWFFTFWISL, IIVVVVLLLNTSVFSNVTDAG, DVLGQINTIAALIFCAAIIAP, IPVGLIVLIVLGYYYTALNLI, FIWTALLGIFYYVWSDLVTVV, SITLFNLLVALVIVGITYVLV, ITTLLTYIFIAIGGAWAFATL, GLGFGMQEIFANFVSGIILLF, and LVISVGVAYGSDLTLVRQLLL.

It belongs to the MscS (TC 1.A.23) family.

The protein resides in the cell membrane. This is an uncharacterized protein from Haemophilus influenzae (strain ATCC 51907 / DSM 11121 / KW20 / Rd).